The following is a 409-amino-acid chain: Pentatricopeptide repeat-containing protein At1g31790 (409 aa).

9 PPR repeats span residues 87–121 (NEDI…SIRP), 122–152 (TITF…MPHR), 153–187 (DFHS…SQKG), 192–226 (PSWI…GFID), 229–259 (DSYL…LSNA), 260–294 (NTVA…GIKK), 295–330 (NVSV…GFES), 331–361 (DCLI…SKDE), and 363–397 (SVSC…GIKA).

It belongs to the PPR family. PCMP-A subfamily.

This is Pentatricopeptide repeat-containing protein At1g31790 (PCMP-A1) from Arabidopsis thaliana (Mouse-ear cress).